Here is a 490-residue protein sequence, read N- to C-terminus: Selenium-binding protein 1 (490 aa).

Residue Ala2 is modified to N-acetylalanine. Positions 21 and 22 each coordinate selenite.

It belongs to the selenium-binding protein family. As to quaternary structure, interacts with GRXS14 and GRXS16. Interacts with DALL3. In terms of tissue distribution, expressed in seedlings, roots, leaves, stems and flowers.

Functionally, binds cadmium and mediates lower sensitivity to stress requiring glutathione (GSH) for tolerance (e.g. cadmium, selenate, and hydrogen peroxide excess). Probably helps to detoxify cadmium potentially through direct binding. Binds selenium, cadmium, zinc and nickel in vitro. This Arabidopsis thaliana (Mouse-ear cress) protein is Selenium-binding protein 1.